The sequence spans 124 residues: Sulfiredoxin (124 aa).

Belongs to the sulfiredoxin family. In terms of assembly, interacts with tpx1 in response to oxidative stress.

Its subcellular location is the cytoplasm. The protein localises to the nucleus. The catalysed reaction is S-hydroxy-S-oxy-L-cysteinyl-[peroxiredoxin] + [protein]-dithiol + ATP = S-hydroxy-L-cysteinyl-[peroxiredoxin] + [protein]-disulfide + ADP + phosphate. In terms of biological role, contributes to oxidative stress resistance by reducing cysteine-sulfinic acid formed under exposure to oxidants in a peroxiredoxin. May catalyze the reduction in a multi-step process by acting both as a specific phosphotransferase and a thioltransferase. In Schizosaccharomyces pombe (strain 972 / ATCC 24843) (Fission yeast), this protein is Sulfiredoxin (srx1).